Reading from the N-terminus, the 252-residue chain is C-type lectin domain family 2 member D3 (252 aa).

Residues 1 to 58 (MSSSAHLQDAPPLLSGTLTQNEGQTSLRQSSSCGPSAASASESLSGYTESRIPHSKVR) are disordered. Topologically, residues 1 to 78 (MSSSAHLQDA…ESRVKRYCCY (78 aa)) are cytoplasmic. A compositionally biased stretch (polar residues) spans 16-29 (GTLTQNEGQTSLRQ). The span at 30–43 (SSSCGPSAASASES) shows a compositional bias: low complexity. A helical; Signal-anchor for type II membrane protein membrane pass occupies residues 79–99 (GGVITVVAIAIVVPLSVTLSV). Residues 100 to 252 (KQMEQTSINN…KPKKYISQSQ (153 aa)) are Extracellular-facing. The region spanning 137 to 242 (YGNKCFYFSE…VYVERPWICS (106 aa)) is the C-type lectin domain. An N-linked (GlcNAc...) asparagine glycan is attached at N150. C158 and C241 are joined by a disulfide.

It localises to the cell membrane. In terms of biological role, lectin-type cell surface receptor. This Rattus norvegicus (Rat) protein is C-type lectin domain family 2 member D3 (Clec2d3).